The following is a 513-amino-acid chain: Maturase K (513 aa).

This sequence belongs to the intron maturase 2 family. MatK subfamily.

Its subcellular location is the plastid. It is found in the chloroplast. Functionally, usually encoded in the trnK tRNA gene intron. Probably assists in splicing its own and other chloroplast group II introns. The protein is Maturase K of Pinus resinosa (Red pine).